A 254-amino-acid polypeptide reads, in one-letter code: 3-deoxy-manno-octulosonate cytidylyltransferase (254 aa).

This sequence belongs to the KdsB family.

It is found in the cytoplasm. It catalyses the reaction 3-deoxy-alpha-D-manno-oct-2-ulosonate + CTP = CMP-3-deoxy-beta-D-manno-octulosonate + diphosphate. The protein operates within nucleotide-sugar biosynthesis; CMP-3-deoxy-D-manno-octulosonate biosynthesis; CMP-3-deoxy-D-manno-octulosonate from 3-deoxy-D-manno-octulosonate and CTP: step 1/1. It participates in bacterial outer membrane biogenesis; lipopolysaccharide biosynthesis. Functionally, activates KDO (a required 8-carbon sugar) for incorporation into bacterial lipopolysaccharide in Gram-negative bacteria. This chain is 3-deoxy-manno-octulosonate cytidylyltransferase, found in Porphyromonas gingivalis (strain ATCC BAA-308 / W83).